The following is a 65-amino-acid chain: Large ribosomal subunit protein bL35 (65 aa).

This sequence belongs to the bacterial ribosomal protein bL35 family.

The polypeptide is Large ribosomal subunit protein bL35 (Desulforapulum autotrophicum (strain ATCC 43914 / DSM 3382 / VKM B-1955 / HRM2) (Desulfobacterium autotrophicum)).